The sequence spans 708 residues: Metal-pseudopaline receptor CntO (708 aa).

Positions 1 to 21 are cleaved as a signal peptide; that stretch reads MRVSVSLVLGVGLGCSSPALW. In terms of domain architecture, TBDR plug spans 63–169; that stretch reads RIEDIPQAIS…PGGTVNLVTK (107 aa). The 535-residue stretch at 174–708 folds into the TBDR beta-barrel domain; that stretch reads ERFARLHASA…NLTMSLTLNY (535 aa).

This sequence belongs to the TonB-dependent receptor family.

It is found in the cell outer membrane. Functionally, transports the metallophore pseudopaline, which is involved in the acquisition of nickel and zinc, and thus enables bacterial growth inside the host, where metal access is limited. Is probably involved in the import of pseudopaline-metal complexes. In Pseudomonas aeruginosa (strain ATCC 15692 / DSM 22644 / CIP 104116 / JCM 14847 / LMG 12228 / 1C / PRS 101 / PAO1), this protein is Metal-pseudopaline receptor CntO.